A 402-amino-acid chain; its full sequence is CCA-adding enzyme (402 aa).

Residues Gly32 and Arg35 each contribute to the ATP site. 2 residues coordinate CTP: Gly32 and Arg35. The Mg(2+) site is built by Asp45 and Asp47. ATP is bound by residues Arg116, Asp159, Arg162, Arg165, and Arg168. Positions 116, 159, 162, 165, and 168 each coordinate CTP.

This sequence belongs to the tRNA nucleotidyltransferase/poly(A) polymerase family. Bacterial CCA-adding enzyme type 3 subfamily. In terms of assembly, homodimer. Mg(2+) is required as a cofactor.

It carries out the reaction a tRNA precursor + 2 CTP + ATP = a tRNA with a 3' CCA end + 3 diphosphate. The catalysed reaction is a tRNA with a 3' CCA end + 2 CTP + ATP = a tRNA with a 3' CCACCA end + 3 diphosphate. In terms of biological role, catalyzes the addition and repair of the essential 3'-terminal CCA sequence in tRNAs without using a nucleic acid template. Adds these three nucleotides in the order of C, C, and A to the tRNA nucleotide-73, using CTP and ATP as substrates and producing inorganic pyrophosphate. tRNA 3'-terminal CCA addition is required both for tRNA processing and repair. Also involved in tRNA surveillance by mediating tandem CCA addition to generate a CCACCA at the 3' terminus of unstable tRNAs. While stable tRNAs receive only 3'-terminal CCA, unstable tRNAs are marked with CCACCA and rapidly degraded. This chain is CCA-adding enzyme, found in Streptococcus agalactiae serotype III (strain NEM316).